Reading from the N-terminus, the 239-residue chain is Gamma-lactamase MBL2 (239 aa).

Zn(2+)-binding residues include His56, His58, Asp60, His61, His141, and Asp165.

Belongs to the metallo-beta-lactamase superfamily.

In terms of biological role, gamma-lactamase; part of the Fusarium detoxification of benzoxazolinone cluster 2 (FDB2) involved in the degradation of benzoxazolinones produced by the host plant. Maize, wheat, and rye produce the 2 benzoxazinone phytoanticipins 2,4-dihy-droxy-7-methoxy-1,4-benzoxazin-3-one (DIMBOA) and 2,4-dihydroxy-1,4-benzoxazin-3-one (DIBOA) that, due to their inherent instability once released, spontaneously degrade to the more stable corresponding benzoxazolinones, 6-methoxy-2-benzoxazolinone (MBOA) and 2-benzoxazolinone (BOA), respectively. The first step in the detoxification of benzoxazolinones involves the hydrolysis of the cyclic ester bond of benzoxazolinones by the FDB1 cluster gamma-lactamase MBL1 to aminophenols. MBL1 is able to convert BOA into 2-aminophenol (2-AP), as well as MBOA into 5-methoxy-2-aminophenol (2-AMP). The FDB2 cluster N-malonyltransferase FDB2/NAT1 then metabolizes aminophenols via N-malonylation to non-toxic malonamic acids. FDB2/NAT1 converts 2-AP into N-(2-hydroxyphenyl) malonamic acid (HPMA) and 2-AMP into N-(2-hydroxy-4-methoxyphenyl) malonamic acid (HMPMA). The duplicated dienlactone hydrolases DLH1 and DLH2 may provide redundant function for hydrolyzing the lactone moiety in the BOA molecule. The roles of the amidases and other enzymes encoded by the 2 FDB clusters have not been identified so far. This is Gamma-lactamase MBL2 from Gibberella moniliformis (strain M3125 / FGSC 7600) (Maize ear and stalk rot fungus).